The chain runs to 91 residues: Ribonuclease P protein component 4 (91 aa).

Cys48, Cys51, Cys71, and Cys74 together coordinate Zn(2+).

The protein belongs to the eukaryotic/archaeal RNase P protein component 4 family. Consists of a catalytic RNA component and at least 4-5 protein subunits. Zn(2+) is required as a cofactor.

Its subcellular location is the cytoplasm. It carries out the reaction Endonucleolytic cleavage of RNA, removing 5'-extranucleotides from tRNA precursor.. Its function is as follows. Part of ribonuclease P, a protein complex that generates mature tRNA molecules by cleaving their 5'-ends. In Picrophilus torridus (strain ATCC 700027 / DSM 9790 / JCM 10055 / NBRC 100828 / KAW 2/3), this protein is Ribonuclease P protein component 4.